Here is a 186-residue protein sequence, read N- to C-terminus: Elongation factor P (186 aa).

It belongs to the elongation factor P family.

Its subcellular location is the cytoplasm. It functions in the pathway protein biosynthesis; polypeptide chain elongation. Its function is as follows. Involved in peptide bond synthesis. Stimulates efficient translation and peptide-bond synthesis on native or reconstituted 70S ribosomes in vitro. Probably functions indirectly by altering the affinity of the ribosome for aminoacyl-tRNA, thus increasing their reactivity as acceptors for peptidyl transferase. The polypeptide is Elongation factor P (Brucella canis (strain ATCC 23365 / NCTC 10854 / RM-666)).